A 361-amino-acid polypeptide reads, in one-letter code: Histidinol-phosphate aminotransferase (361 aa).

K218 is subject to N6-(pyridoxal phosphate)lysine.

This sequence belongs to the class-II pyridoxal-phosphate-dependent aminotransferase family. Histidinol-phosphate aminotransferase subfamily. As to quaternary structure, homodimer. The cofactor is pyridoxal 5'-phosphate.

The enzyme catalyses L-histidinol phosphate + 2-oxoglutarate = 3-(imidazol-4-yl)-2-oxopropyl phosphate + L-glutamate. It functions in the pathway amino-acid biosynthesis; L-histidine biosynthesis; L-histidine from 5-phospho-alpha-D-ribose 1-diphosphate: step 7/9. The sequence is that of Histidinol-phosphate aminotransferase from Dinoroseobacter shibae (strain DSM 16493 / NCIMB 14021 / DFL 12).